Reading from the N-terminus, the 358-residue chain is Peroxisome biogenesis protein 3-1 (358 aa).

Residues 15 to 32 (ILVTTTCLGSGYLLYKLY) traverse the membrane as a helical segment. The stretch at 33–62 (NAHTRKLADLERELANERENDEIIKTQMKA) forms a coiled coil.

Belongs to the peroxin-3 family.

It is found in the peroxisome membrane. In terms of biological role, involved in morphology determination of peroxisomes, but not in import of peroxisomal matrix proteins. May act as a docking factor for PEX19 and be necessary for the import of peroxisomal membrane proteins in the peroxisomes. The sequence is that of Peroxisome biogenesis protein 3-1 (PEX3-1) from Arabidopsis thaliana (Mouse-ear cress).